Consider the following 880-residue polypeptide: DNA mismatch repair protein MutS (880 aa).

631–638 provides a ligand contact to ATP; that stretch reads GPNMAGKS. The tract at residues 835-860 is disordered; that stretch reads RAAPPPPAPAAPKTSPVEERLREIQP. The span at 850–860 shows a compositional bias: basic and acidic residues; that stretch reads PVEERLREIQP.

This sequence belongs to the DNA mismatch repair MutS family.

In terms of biological role, this protein is involved in the repair of mismatches in DNA. It is possible that it carries out the mismatch recognition step. This protein has a weak ATPase activity. In Cereibacter sphaeroides (strain ATCC 17029 / ATH 2.4.9) (Rhodobacter sphaeroides), this protein is DNA mismatch repair protein MutS.